The chain runs to 421 residues: Medium-chain specific acyl-CoA dehydrogenase, mitochondrial (421 aa).

A mitochondrion-targeting transit peptide spans 1-25; it reads MAAAFRRGCRVLRSVSHFECRTQHS. N6-acetyllysine; alternate occurs at positions 30 and 69. An N6-succinyllysine; alternate mark is found at K30 and K69. Position 79 is an N6-acetyllysine (K79). 158-167 serves as a coordination point for FAD; it reads YCVTEPSAGS. Position 167 (S167) interacts with octanoyl-CoA. K179 is subject to N6-succinyllysine. Position 191-193 (191-193) interacts with FAD; that stretch reads WIT. K212 is subject to N6-acetyllysine; alternate. Residue K212 is modified to N6-succinyllysine; alternate. S216 provides a ligand contact to octanoyl-CoA. N6-acetyllysine; alternate is present on residues K217, K235, K259, and K271. Residues K217, K235, K259, and K271 each carry the N6-succinyllysine; alternate modification. Positions 278 and 281 each coordinate octanoyl-CoA. N6-acetyllysine is present on K301. Residues 306–308 and 316–317 each bind FAD; these read RKT and HQ. 2 residues coordinate octanoyl-CoA: R349 and T351. T351 is modified (phosphothreonine). 374 to 378 provides a ligand contact to FAD; sequence QIFGG. Octanoyl-CoA is bound at residue E401. E401 (proton acceptor) is an active-site residue. 402-405 provides a ligand contact to FAD; that stretch reads GTAQ.

Belongs to the acyl-CoA dehydrogenase family. Homotetramer. Interacts with the heterodimeric electron transfer flavoprotein ETF. Requires FAD as cofactor. Post-translationally, acetylated. Could occur at proximity of the cofactor-binding sites and reduce the catalytic activity. Could be deacetylated by SIRT3.

The protein resides in the mitochondrion matrix. The catalysed reaction is a medium-chain 2,3-saturated fatty acyl-CoA + oxidized [electron-transfer flavoprotein] + H(+) = a medium-chain (2E)-enoyl-CoA + reduced [electron-transfer flavoprotein]. It catalyses the reaction pentanoyl-CoA + oxidized [electron-transfer flavoprotein] + H(+) = (2E)-pentenoyl-CoA + reduced [electron-transfer flavoprotein]. It carries out the reaction hexanoyl-CoA + oxidized [electron-transfer flavoprotein] + H(+) = (2E)-hexenoyl-CoA + reduced [electron-transfer flavoprotein]. The enzyme catalyses octanoyl-CoA + oxidized [electron-transfer flavoprotein] + H(+) = (2E)-octenoyl-CoA + reduced [electron-transfer flavoprotein]. The catalysed reaction is decanoyl-CoA + oxidized [electron-transfer flavoprotein] + H(+) = (2E)-decenoyl-CoA + reduced [electron-transfer flavoprotein]. It catalyses the reaction dodecanoyl-CoA + oxidized [electron-transfer flavoprotein] + H(+) = (2E)-dodecenoyl-CoA + reduced [electron-transfer flavoprotein]. It carries out the reaction tetradecanoyl-CoA + oxidized [electron-transfer flavoprotein] + H(+) = (2E)-tetradecenoyl-CoA + reduced [electron-transfer flavoprotein]. The enzyme catalyses oxidized [electron-transfer flavoprotein] + hexadecanoyl-CoA + H(+) = (2E)-hexadecenoyl-CoA + reduced [electron-transfer flavoprotein]. It functions in the pathway lipid metabolism; mitochondrial fatty acid beta-oxidation. Its function is as follows. Medium-chain specific acyl-CoA dehydrogenase is one of the acyl-CoA dehydrogenases that catalyze the first step of mitochondrial fatty acid beta-oxidation, an aerobic process breaking down fatty acids into acetyl-CoA and allowing the production of energy from fats. The first step of fatty acid beta-oxidation consists in the removal of one hydrogen from C-2 and C-3 of the straight-chain fatty acyl-CoA thioester, resulting in the formation of trans-2-enoyl-CoA. Electron transfer flavoprotein (ETF) is the electron acceptor that transfers electrons to the main mitochondrial respiratory chain via ETF-ubiquinone oxidoreductase (ETF dehydrogenase). Among the different mitochondrial acyl-CoA dehydrogenases, medium-chain specific acyl-CoA dehydrogenase acts specifically on acyl-CoAs with saturated 6 to 12 carbons long primary chains. This Mus musculus (Mouse) protein is Medium-chain specific acyl-CoA dehydrogenase, mitochondrial.